Consider the following 319-residue polypeptide: Acetyl-coenzyme A carboxylase carboxyl transferase subunit alpha (319 aa).

One can recognise a CoA carboxyltransferase C-terminal domain in the interval 31-292 (EIDSAIRSLR…KTYLSRQLSE (262 aa)).

It belongs to the AccA family. As to quaternary structure, acetyl-CoA carboxylase is a heterohexamer composed of biotin carboxyl carrier protein (AccB), biotin carboxylase (AccC) and two subunits each of ACCase subunit alpha (AccA) and ACCase subunit beta (AccD).

Its subcellular location is the cytoplasm. The catalysed reaction is N(6)-carboxybiotinyl-L-lysyl-[protein] + acetyl-CoA = N(6)-biotinyl-L-lysyl-[protein] + malonyl-CoA. It participates in lipid metabolism; malonyl-CoA biosynthesis; malonyl-CoA from acetyl-CoA: step 1/1. In terms of biological role, component of the acetyl coenzyme A carboxylase (ACC) complex. First, biotin carboxylase catalyzes the carboxylation of biotin on its carrier protein (BCCP) and then the CO(2) group is transferred by the carboxyltransferase to acetyl-CoA to form malonyl-CoA. The polypeptide is Acetyl-coenzyme A carboxylase carboxyl transferase subunit alpha (Rhodopirellula baltica (strain DSM 10527 / NCIMB 13988 / SH1)).